The primary structure comprises 209 residues: Small ribosomal subunit protein uS5 (209 aa).

In terms of domain architecture, S5 DRBM spans Leu-48 to Ile-111.

The protein belongs to the universal ribosomal protein uS5 family. Part of the 30S ribosomal subunit. Contacts protein S4.

Functionally, with S4 and S12 plays an important role in translational accuracy. The chain is Small ribosomal subunit protein uS5 from Methanosarcina acetivorans (strain ATCC 35395 / DSM 2834 / JCM 12185 / C2A).